The primary structure comprises 316 residues: Protein U25 (316 aa).

The protein belongs to the herpesviridae US22 family.

This Homo sapiens (Human) protein is Protein U25 (U25).